Here is a 1392-residue protein sequence, read N- to C-terminus: FERM and PDZ domain-containing protein 2 (1392 aa).

The KIND domain maps to 15–197 (VTLASALQVR…SEVERRVVEE (183 aa)). The interval 211-246 (SRLHQADGESPGAPASDALQPRRVSERSAETQSSLE) is disordered. The FERM domain maps to 342 to 642 (CVVLLNGRCL…WFNAQTGSKH (301 aa)). The PDZ 1 domain maps to 775–861 (GLFGEPNQDI…MAVRMIQNSP (87 aa)). The segment at 903-930 (GRQSPHIHDQDRSVRGTEMAQGAGSCPP) is disordered. Positions 908-917 (HIHDQDRSVR) are enriched in basic and acidic residues. The interval 937-1027 (TGEIYFVELV…VARLVLERRG (91 aa)) is interaction with GRIN2A and GRIN2B. PDZ domains follow at residues 950–1035 (GTLG…PQCP) and 1079–1167 (RGLG…PEME). The disordered stretch occupies residues 1186–1236 (CAGSEQSPSLDQEDNWRDSTSLDAGEGLSPGPESSYKDVRQVKGDREKERP). A compositionally biased stretch (basic and acidic residues) spans 1220 to 1236 (SYKDVRQVKGDREKERP).

As to quaternary structure, interacts (via the second PDZ domain) with CTNND2 (via the extreme C-terminus). Interacts (via the second PDZ domain) with PKP4 (via the extreme C-terminus); the interaction directs FRMPD2 to the basolateral membranes. Interacts (via the second PDZ domain) with ARVCF (via the extreme C-terminus). Interacts (via the second PDZ domain) with NMDAR subunits GRIN2A/GLUN2A and GRIN2B/GLUN2B (via the extreme C-terminus); the interaction is direct and is likely to promote NMDAR-mediated neural signal transmission. Binds GRIN2A with lower affinity than GRIN2B. Interacts (via the third PDZ domain) with LRIT1 (via the extreme C-terminus); the interaction leads to their colocalization in photoreceptor synapses. Interacts with NOD2; the interaction is likely to trigger NOD2-mediated nuclear factor kappaB activation.

It is found in the cytoplasm. The protein localises to the postsynaptic density. The protein resides in the basolateral cell membrane. It localises to the cell junction. Its subcellular location is the tight junction. Functionally, functions as a scaffold protein and likely plays a role in N-methyl-D-aspartic acid receptor (NMDAR)-mediated synaptic excitatory transmission. May be involved in synapse formation in cone photoreceptor cells. May play a role in the regulation of tight junction formation. Binds phosphatidylinositol 3,4-bisphosphate (PtdIns(3,4)P2). May pNF-kappa-Blay a role in the regulation of NOD2-mediated NF-kappa-B activation in immune response. The sequence is that of FERM and PDZ domain-containing protein 2 from Mus musculus (Mouse).